Here is a 601-residue protein sequence, read N- to C-terminus: Threonine dehydratase (601 aa).

The transit peptide at 1–51 (MEVLCQAPAGNSNFACNPKFTAIRTRAISSNDTFKVISSTGNNKKMKGAIR) directs the protein to the chloroplast. ACT-like domains follow at residues 427-499 (ALLA…NLTN) and 521-592 (IFCQ…IESL).

This sequence belongs to the serine/threonine dehydratase family. Requires pyridoxal 5'-phosphate as cofactor.

The protein resides in the plastid. It is found in the chloroplast. It catalyses the reaction L-threonine = 2-oxobutanoate + NH4(+). It functions in the pathway amino-acid biosynthesis; L-isoleucine biosynthesis; 2-oxobutanoate from L-threonine: step 1/1. Its function is as follows. Catalyzes the conversion of threonine to alpha-keto butyrate in isoleucine (Ile) biosynthesis. Required for JA-Ile biosynthesis, a signaling molecule involved in defense and resistance to the herbivore Manduca sexta caterpillars. This Nicotiana attenuata (Coyote tobacco) protein is Threonine dehydratase.